The following is a 198-amino-acid chain: Inosine triphosphate pyrophosphatase (198 aa).

Residue Ala2 is modified to N-acetylalanine. ITP is bound at residue Thr14–Lys19. Glu44 is a Mg(2+) binding site. ITP-binding positions include Lys56, Asp72 to Thr73, and Lys89. The residue at position 146 (Ser146) is a Phosphoserine. ITP-binding positions include Phe149–Asp152, Lys172, and His177–Arg178.

Belongs to the HAM1 NTPase family. As to quaternary structure, homodimer. Mg(2+) is required as a cofactor. Requires Mn(2+) as cofactor.

The protein resides in the cytoplasm. The catalysed reaction is ITP + H2O = IMP + diphosphate + H(+). It catalyses the reaction dITP + H2O = dIMP + diphosphate + H(+). The enzyme catalyses XTP + H2O = XMP + diphosphate + H(+). It carries out the reaction N(6)-hydroxy-dATP + H2O = N(6)-hydroxy-dAMP + diphosphate + H(+). Its function is as follows. Pyrophosphatase that hydrolyzes the non-canonical purine nucleotides inosine triphosphate (ITP), deoxyinosine triphosphate (dITP) as well as 2'-deoxy-N-6-hydroxylaminopurine triphosphate (dHAPTP) and xanthosine 5'-triphosphate (XTP) to their respective monophosphate derivatives. The enzyme does not distinguish between the deoxy- and ribose forms. Probably excludes non-canonical purines from RNA and DNA precursor pools, thus preventing their incorporation into RNA and DNA and avoiding chromosomal lesions. This is Inosine triphosphate pyrophosphatase (Itpa) from Rattus norvegicus (Rat).